The sequence spans 488 residues: UDP-N-acetylmuramate--L-alanine ligase (488 aa).

Position 122-128 (122-128) interacts with ATP; sequence GTHGKTT.

The protein belongs to the MurCDEF family.

The protein resides in the cytoplasm. It carries out the reaction UDP-N-acetyl-alpha-D-muramate + L-alanine + ATP = UDP-N-acetyl-alpha-D-muramoyl-L-alanine + ADP + phosphate + H(+). It participates in cell wall biogenesis; peptidoglycan biosynthesis. In terms of biological role, cell wall formation. The chain is UDP-N-acetylmuramate--L-alanine ligase from Mycobacterium marinum (strain ATCC BAA-535 / M).